We begin with the raw amino-acid sequence, 105 residues long: Large ribosomal subunit protein P1 (105 aa).

A Blocked amino end (Met) modification is found at methionine 1. Over residues 65–76 (VAAPAGQQTQQA) the composition is skewed to low complexity. The disordered stretch occupies residues 65-105 (VAAPAGQQTQQAAEKKEEKKEEEKKGPSEEEIGGGLSSLFG). A compositionally biased stretch (basic and acidic residues) spans 77–92 (AEKKEEKKEEEKKGPS).

This sequence belongs to the eukaryotic ribosomal protein P1/P2 family. In terms of assembly, part of the 50S ribosomal subunit. Homodimer, it forms part of the ribosomal stalk which helps the ribosome interact with GTP-bound translation factors. Forms a heptameric uL10/P0(P1)2(P1)2(P1)2 complex, where uL10/P0 forms an elongated spine to which the P1 dimers bind in a sequential fashion.

In terms of biological role, forms part of the ribosomal stalk, playing a central role in the interaction of the ribosome with GTP-bound translation factors. In Sulfolobus acidocaldarius (strain ATCC 33909 / DSM 639 / JCM 8929 / NBRC 15157 / NCIMB 11770), this protein is Large ribosomal subunit protein P1.